Here is a 159-residue protein sequence, read N- to C-terminus: Transcription elongation factor GreA (159 aa).

This sequence belongs to the GreA/GreB family.

Necessary for efficient RNA polymerase transcription elongation past template-encoded arresting sites. The arresting sites in DNA have the property of trapping a certain fraction of elongating RNA polymerases that pass through, resulting in locked ternary complexes. Cleavage of the nascent transcript by cleavage factors such as GreA or GreB allows the resumption of elongation from the new 3'terminus. GreA releases sequences of 2 to 3 nucleotides. This is Transcription elongation factor GreA from Buchnera aphidicola subsp. Cinara cedri (strain Cc).